A 129-amino-acid polypeptide reads, in one-letter code: Ribonuclease VapC12 (129 aa).

Mg(2+)-binding residues include Asp5 and Asp94.

Belongs to the PINc/VapC protein family. Mg(2+) is required as a cofactor.

Functionally, toxic component of a type II toxin-antitoxin (TA) system. An RNase. The cognate antitoxin is VapB12. This chain is Ribonuclease VapC12, found in Mycobacterium tuberculosis (strain CDC 1551 / Oshkosh).